Consider the following 245-residue polypeptide: Phycocyanobilin:ferredoxin oxidoreductase (245 aa).

It belongs to the HY2 family.

The catalysed reaction is (2R,3Z)-phycocyanobilin + 4 oxidized [2Fe-2S]-[ferredoxin] = biliverdin IXalpha + 4 reduced [2Fe-2S]-[ferredoxin] + 4 H(+). Catalyzes the four-electron reduction of biliverdin IX-alpha (2-electron reduction at both the A and D rings); the reaction proceeds via an isolatable 2-electron intermediate, 181,182-dihydrobiliverdin. This is Phycocyanobilin:ferredoxin oxidoreductase from Rippkaea orientalis (strain PCC 8801 / RF-1) (Cyanothece sp. (strain PCC 8801)).